Here is a 396-residue protein sequence, read N- to C-terminus: Phosphopentomutase (396 aa).

Mn(2+)-binding residues include Asp-13, Asp-288, His-293, Asp-329, His-330, and His-341.

The protein belongs to the phosphopentomutase family. Mn(2+) serves as cofactor.

The protein resides in the cytoplasm. The catalysed reaction is 2-deoxy-alpha-D-ribose 1-phosphate = 2-deoxy-D-ribose 5-phosphate. It carries out the reaction alpha-D-ribose 1-phosphate = D-ribose 5-phosphate. The protein operates within carbohydrate degradation; 2-deoxy-D-ribose 1-phosphate degradation; D-glyceraldehyde 3-phosphate and acetaldehyde from 2-deoxy-alpha-D-ribose 1-phosphate: step 1/2. Functionally, isomerase that catalyzes the conversion of deoxy-ribose 1-phosphate (dRib-1-P) and ribose 1-phosphate (Rib-1-P) to deoxy-ribose 5-phosphate (dRib-5-P) and ribose 5-phosphate (Rib-5-P), respectively. This is Phosphopentomutase from Clostridium botulinum (strain Alaska E43 / Type E3).